Consider the following 400-residue polypeptide: NADH-quinone oxidoreductase subunit D (400 aa).

It belongs to the complex I 49 kDa subunit family. In terms of assembly, NDH-1 is composed of 14 different subunits. Subunits NuoB, C, D, E, F, and G constitute the peripheral sector of the complex.

The protein resides in the cell inner membrane. It carries out the reaction a quinone + NADH + 5 H(+)(in) = a quinol + NAD(+) + 4 H(+)(out). Functionally, NDH-1 shuttles electrons from NADH, via FMN and iron-sulfur (Fe-S) centers, to quinones in the respiratory chain. The immediate electron acceptor for the enzyme in this species is believed to be a menaquinone. Couples the redox reaction to proton translocation (for every two electrons transferred, four hydrogen ions are translocated across the cytoplasmic membrane), and thus conserves the redox energy in a proton gradient. This chain is NADH-quinone oxidoreductase subunit D, found in Chlorobium phaeovibrioides (strain DSM 265 / 1930) (Prosthecochloris vibrioformis (strain DSM 265)).